The following is a 354-amino-acid chain: GTPase Obg (354 aa).

Residues 1–159 (MKFVDEVKIH…RDLVLELKLL (159 aa)) enclose the Obg domain. An OBG-type G domain is found at 160 to 333 (ADVGIVGYPN…LLDAVGRALF (174 aa)). GTP contacts are provided by residues 166–173 (GYPNAGKS), 191–195 (FTTLT), 212–215 (DIPG), 283–286 (TKID), and 314–316 (SAV). Residues S173 and T193 each contribute to the Mg(2+) site.

The protein belongs to the TRAFAC class OBG-HflX-like GTPase superfamily. OBG GTPase family. As to quaternary structure, monomer. It depends on Mg(2+) as a cofactor.

It localises to the cytoplasm. An essential GTPase which binds GTP, GDP and possibly (p)ppGpp with moderate affinity, with high nucleotide exchange rates and a fairly low GTP hydrolysis rate. Plays a role in control of the cell cycle, stress response, ribosome biogenesis and in those bacteria that undergo differentiation, in morphogenesis control. The protein is GTPase Obg of Anaeromyxobacter dehalogenans (strain 2CP-1 / ATCC BAA-258).